Consider the following 348-residue polypeptide: MTYNIVALPGDGIGPEILNGSLSLLEIISNKYNFNYQIEHHEFGGASIDTFGEPLTEKTLNACKRADAILLGAIGGPKWTDPNNRPEQGLLKLRKSLNLFANIRPTTVVKGASSLSPLKEERVEGKDLVIVRELTSGIYFGEPRHFNNHEALDSLTYTREEIERIVHVAFKLAASRRGKLTSVDKENVLASSKLWRKVVNEVSQLYPEVTVNHLLVDACSMHLITNPKQFDVIVCENLFGDILSDEASVIPGSLGLSPSASFSNDGPRLYEPIHGSAPDIAGKNVANPFGMILSLAMCLRESLNQPDAADELEQHIYNMIEHGQTTADLGGKLNTTDIFEILSQKLNH.

76-87 (GPKWTDPNNRPE) lines the NAD(+) pocket. Substrate is bound by residues arginine 94, arginine 104, arginine 132, and aspartate 217. Residues aspartate 217, aspartate 241, and aspartate 245 each contribute to the Mg(2+) site. An NAD(+)-binding site is contributed by 275 to 287 (GSAPDIAGKNVAN).

The protein belongs to the isocitrate and isopropylmalate dehydrogenases family. LeuB type 1 subfamily. In terms of assembly, homodimer. Mg(2+) is required as a cofactor. Mn(2+) serves as cofactor.

It is found in the cytoplasm. The enzyme catalyses (2R,3S)-3-isopropylmalate + NAD(+) = 4-methyl-2-oxopentanoate + CO2 + NADH. It participates in amino-acid biosynthesis; L-leucine biosynthesis; L-leucine from 3-methyl-2-oxobutanoate: step 3/4. In terms of biological role, catalyzes the oxidation of 3-carboxy-2-hydroxy-4-methylpentanoate (3-isopropylmalate) to 3-carboxy-4-methyl-2-oxopentanoate. The product decarboxylates to 4-methyl-2 oxopentanoate. This is 3-isopropylmalate dehydrogenase from Staphylococcus aureus (strain MW2).